The following is a 271-amino-acid chain: Shikimate dehydrogenase (NADP(+)) (271 aa).

Shikimate contacts are provided by residues 14–16 (SLS) and Thr-61. The active-site Proton acceptor is the Lys-65. Residues Asn-86 and Asp-101 each coordinate shikimate. Residues 125–129 (GAGGA) and Ile-212 each bind NADP(+). Tyr-214 is a shikimate binding site. Gly-235 contacts NADP(+).

It belongs to the shikimate dehydrogenase family. As to quaternary structure, homodimer.

It catalyses the reaction shikimate + NADP(+) = 3-dehydroshikimate + NADPH + H(+). The protein operates within metabolic intermediate biosynthesis; chorismate biosynthesis; chorismate from D-erythrose 4-phosphate and phosphoenolpyruvate: step 4/7. In terms of biological role, involved in the biosynthesis of the chorismate, which leads to the biosynthesis of aromatic amino acids. Catalyzes the reversible NADPH linked reduction of 3-dehydroshikimate (DHSA) to yield shikimate (SA). This is Shikimate dehydrogenase (NADP(+)) from Clostridium perfringens (strain 13 / Type A).